Reading from the N-terminus, the 469-residue chain is Probable ribonuclease FAU-1 (469 aa).

Belongs to the FAU-1 family.

Its function is as follows. Probable RNase involved in rRNA stability through maturation and/or degradation of precursor rRNAs. Binds to RNA in loop regions with AU-rich sequences. The sequence is that of Probable ribonuclease FAU-1 from Ignicoccus hospitalis (strain KIN4/I / DSM 18386 / JCM 14125).